Consider the following 527-residue polypeptide: Mitochondrial substrate carrier family protein V (527 aa).

Positions 1–14 (MNSSDFKKSFKEST) are enriched in basic and acidic residues. The tract at residues 1-29 (MNSSDFKKSFKESTENNSNTYRPSKTLNT) is disordered. Topologically, residues 1–132 (MNSSDFKKSF…VSKKSISKEN (132 aa)) are mitochondrial intermembrane. Over residues 15–29 (ENNSNTYRPSKTLNT) the composition is skewed to polar residues. Solcar repeat units follow at residues 130–220 (KENV…CKKH), 253–345 (MTVP…FKII), and 430–519 (VNMI…CKDL). The helical transmembrane segment at 133–153 (VNYLVSGSIAGAISRSATAGF) threads the bilayer. At 154 to 187 (ERLTIIQQVQGMSQNLSQGYVGCIAAMKEMVKRE) the chain is on the mitochondrial matrix side. The chain crosses the membrane as a helical span at residues 188–208 (GFKSIWKGNGANIVKVSPNSG). Residues 209-258 (IRFLTYEFCKKHFLDNSSNHPSSSSIENGIDGNGVGCGSGSEMKMTVPQT) are Mitochondrial intermembrane-facing. The helical transmembrane segment at 259-279 (MFSGAMAGLTSTFFTYPLDVV) threads the bilayer. Residues 280-324 (RIRLSLQGSCSNDYAAHRYNGITHSFFKIHKDEGVKGLYKGLGTS) lie on the Mitochondrial matrix side of the membrane. The chain crosses the membrane as a helical span at residues 325 to 345 (IASIVPWVSISFATYEGFKII). Over 346 to 435 (CKKMILNYQI…LKKGVNMICD (90 aa)) the chain is Mitochondrial intermembrane. A helical transmembrane segment spans residues 436–456 (FVCGALSGAVTMTVCYPLDVL). Residues 457–487 (RRRMMIQGIGGNKVLYKNGWDATKKILSNEG) lie on the Mitochondrial matrix side of the membrane. The helical transmembrane segment at 488-508 (LVAFYHGIIPAYFKVVPTVAI) threads the bilayer. Residues 509 to 527 (SFAVYEICKDLGSNKYQQK) lie on the Mitochondrial intermembrane side of the membrane.

This sequence belongs to the mitochondrial carrier (TC 2.A.29) family.

Its subcellular location is the mitochondrion inner membrane. Mitochondrial solute carriers shuttle metabolites, nucleotides, and cofactors through the mitochondrial inner membrane. This chain is Mitochondrial substrate carrier family protein V (mcfV), found in Dictyostelium discoideum (Social amoeba).